The primary structure comprises 907 residues: Leucine-rich repeat-containing G-protein coupled receptor 5 (907 aa).

The first 21 residues, 1–21 (MDTSRVRMLLSLLALLQLVAA), serve as a signal peptide directing secretion. Over 22–561 (GSPPRPDTMP…EHLFGSWLIR (540 aa)) the chain is Extracellular. Residues 33 to 64 (GCPSYCHCELDGRMLLRVDCSDLGLSELPSNL) enclose the LRRNT domain. 2 disulfide bridges follow: Cys-34–Cys-40 and Cys-38–Cys-52. LRR repeat units lie at residues 44–64 (GRMLLRVDCSDLGLSELPSNL), 65–88 (SVFTSYLDLSMNNISQLPASLLHR), 89–112 (LRFLEELRLAGNALTHIPKGAFAG), 114–136 (HSLKVLMLQNNQLRQVPEEALQN), 137–160 (LRSLQSLRLDANHISYVPPSCFSG), 162–184 (HSLRHLWLDDNALTDVPVQAFRS), 186–208 (SALQAMTLALNKIHHIADHAFGN), 209–232 (LSSLVVLHLHNNRIHSLGKKCFDG), 233–256 (LHSLETLDLNYNNLDEFPTAIKTL), 257–279 (SNLKELGFHSNNIRSIPERAFVG), 281–303 (PSLITIHFYDNPIQFVGISAFQH), 304–327 (LPELRTLTLNGASQITEFPDLTGT), 328–350 (ATLESLTLTGAKISSLPQTVCDQ), 351–375 (LPNLQVLDLSYNLLEDLPSLSGCQK), 377–396 (QKIDLRHNEIYEIKGGTFQQ), 397–420 (LFNLRSLNLARNKIAIIHPNAFST), and 422–444 (PSLIKLDLSSNLLSSFPVTGLHG). Asn-63 and Asn-77 each carry an N-linked (GlcNAc...) asparagine glycan. The N-linked (GlcNAc...) asparagine glycan is linked to Asn-208. Cysteines 348 and 373 form a disulfide. Cys-479 and Cys-541 are joined by a disulfide. Residues 562 to 582 (IGVWTTAVLALSCNALVAFTV) traverse the membrane as a helical segment. Residues 564-585 (VWTTAVLALSCNALVAFTVFRT) form an LRR 18 repeat. Over 583–595 (FRTPLYISSIKLL) the chain is Cytoplasmic. Residues 596–616 (IGVIAVVDILMGVSSAILAVV) traverse the membrane as a helical segment. The Extracellular segment spans residues 617-638 (DTFTFGSFAQHGAWWEGGIGCQ). Residues Cys-637 and Cys-712 are joined by a disulfide bond. The helical transmembrane segment at 639–659 (IVGFLSIFASESSVFLLTLAA) threads the bilayer. Residues 660–682 (LERGFSVKCSSKFEMKAPLSSLK) are Cytoplasmic-facing. The chain crosses the membrane as a helical span at residues 683-703 (AIILLCVLLALTIATVPLLGG). Over 704–723 (SEYNASPLCLPLPFGEPSTT) the chain is Extracellular. A helical membrane pass occupies residues 724-744 (GYMVALVLLNSLCFLIMTIAY). Topologically, residues 745 to 775 (TRLYCSLEKGELENLWDCSMVKHTALLLFTN) are cytoplasmic. The chain crosses the membrane as a helical span at residues 776-796 (CILYCPVAFLSFSSLLNLTFI). The Extracellular portion of the chain corresponds to 797-802 (SPEVIK). Residues 803–823 (FILLVIVPLPACLNPLLYIVF) form a helical membrane-spanning segment. Over 824 to 907 (NPHFKEDMGS…LSSVAFVPCL (84 aa)) the chain is Cytoplasmic.

This sequence belongs to the G-protein coupled receptor 1 family. As to quaternary structure, identified in a complex composed of RNF43, LGR5 and RSPO1. Also interacts with other R-spondin ligands, including RSPO2, RSPO3 and RSPO4.

The protein localises to the cell membrane. The protein resides in the golgi apparatus. It is found in the trans-Golgi network membrane. Functionally, receptor for R-spondins that potentiates the canonical Wnt signaling pathway and acts as a stem cell marker of the intestinal epithelium and the hair follicle. Upon binding to R-spondins (RSPO1, RSPO2, RSPO3 or RSPO4), associates with phosphorylated LRP6 and frizzled receptors that are activated by extracellular Wnt receptors, triggering the canonical Wnt signaling pathway to increase expression of target genes. In contrast to classical G-protein coupled receptors, does not activate heterotrimeric G-proteins to transduce the signal. Involved in the development and/or maintenance of the adult intestinal stem cells during postembryonic development. The sequence is that of Leucine-rich repeat-containing G-protein coupled receptor 5 (Lgr5) from Rattus norvegicus (Rat).